The following is a 383-amino-acid chain: Corticosteroid-binding globulin (383 aa).

Residues asparagine 74 and asparagine 154 are each glycosylated (N-linked (GlcNAc...) asparagine). Residue glutamine 232 participates in cortisol binding. Asparagine 238 carries N-linked (GlcNAc...) asparagine glycosylation. Glutamine 264 serves as a coordination point for cortisol. An N-linked (GlcNAc...) asparagine glycan is attached at asparagine 308. Position 371 (tryptophan 371) interacts with cortisol.

The protein belongs to the serpin family. Produced and secreted by hepatocytes, but has also been identified in a number of glycocorticoid responsive cells (it is found in maternal lung, spleen, and ovary and fetal kidney).

Its subcellular location is the secreted. Functionally, major transport protein for glucocorticoids and progestins in the blood of almost all vertebrate species. In Oryctolagus cuniculus (Rabbit), this protein is Corticosteroid-binding globulin (SERPINA6).